The following is a 211-amino-acid chain: FMN-dependent NADH:quinone oxidoreductase (211 aa).

FMN-binding positions include S10, 16–18 (STS), and 138–141 (TQGG).

The protein belongs to the azoreductase type 1 family. As to quaternary structure, homodimer. The cofactor is FMN.

The enzyme catalyses 2 a quinone + NADH + H(+) = 2 a 1,4-benzosemiquinone + NAD(+). The catalysed reaction is N,N-dimethyl-1,4-phenylenediamine + anthranilate + 2 NAD(+) = 2-(4-dimethylaminophenyl)diazenylbenzoate + 2 NADH + 2 H(+). Functionally, quinone reductase that provides resistance to thiol-specific stress caused by electrophilic quinones. Also exhibits azoreductase activity. Catalyzes the reductive cleavage of the azo bond in aromatic azo compounds to the corresponding amines. The chain is FMN-dependent NADH:quinone oxidoreductase from Frankia alni (strain DSM 45986 / CECT 9034 / ACN14a).